Consider the following 290-residue polypeptide: UPF0761 membrane protein Ent638_4092 (290 aa).

Transmembrane regions (helical) follow at residues 44–64 (LLSLVPLVAVIFALFAAFPMF), 104–124 (VGACGLIVTALLLMYAIDSAL), 140–160 (FAVYWMILTLGPLLAGASLAI), 183–203 (IFPLILSWLAFWLLYSIVPTL), 210–230 (AIVGALVAAILFELGKKGFAL), and 244–264 (VLAVVPILFVWVYWTWCIVLL).

The protein belongs to the UPF0761 family.

The protein localises to the cell inner membrane. This chain is UPF0761 membrane protein Ent638_4092, found in Enterobacter sp. (strain 638).